Here is a 555-residue protein sequence, read N- to C-terminus: Potassium-transporting ATPase potassium-binding subunit (555 aa).

10 helical membrane-spanning segments follow: residues 2-22 (IWVAVVITMLLFILVAKPTGI), 60-80 (QYALSLVLLNGFMIVVVYFIF), 130-150 (IGITFLMFAAPATTLALVMAF), 173-193 (VFLPITFMAALVFVALGVPQT), 246-266 (MSNILQMMLMMLLPTALPFTY), 278-298 (ILFVSLFMVFLLGFITITTSE), 374-394 (AGFVNIIMYAIIAVFISGLMV), 412-432 (LIAVTILFHPLLILGFSALAL), 483-503 (LVMFLGRYFSLITMLAVAASL), and 525-545 (GIFIGTIVIVGALTFFPMLVL).

Belongs to the KdpA family. The system is composed of three essential subunits: KdpA, KdpB and KdpC.

The protein localises to the cell membrane. In terms of biological role, part of the high-affinity ATP-driven potassium transport (or Kdp) system, which catalyzes the hydrolysis of ATP coupled with the electrogenic transport of potassium into the cytoplasm. This subunit binds the extracellular potassium ions and delivers the ions to the membrane domain of KdpB through an intramembrane tunnel. The sequence is that of Potassium-transporting ATPase potassium-binding subunit from Bacillus cereus (strain AH187).